Reading from the N-terminus, the 671-residue chain is MEIFLAVLVLLALIASSNIINRFVPFIPVPLIQVGLGILVAAFPSGLHISLNPELFFVLFIAPLLFNDGKRTPRDELWKLRAPILLLALGLVFATVIVAGYTIHWMIPSIPLPAAFALAAILSPTDVVAVSALSSRVNMPKGIMRLLEGEGLMNDASGLVAFKFAIAATVTGAFSIAEASFSFVLIAAGGLLTGFILSFFIIRFRYFLRRLGMDDVTMHIILQILTPFVIYLAAEEIGVSGILAVVAGGVTHAIEQDRMEANLAKLQIASSNTWNIILFILNGLVFVILGLQIPDVSTVIFQDEAFNNMQVITYILIITLCLMILRFLWVWLFWAGKWSATKKQNVKKPKLRASMLMTFSGVRGAVTLAGAFSIPFTLADGSPFPERHLIIFLAAGVILCTLILASVLLPLLSEKKDKQIAVDLDTKIQHAKRKLLRSAIKTLREGMNEDNREVSLALINDYRMKLRNIQREPYQFGMRRQEKKIRLHGIKAEQMKLQQLIEEEKIDQQEAYELQERFHELEMLYSNSFKIRFSKVKFLRLLQWLQLWRPNQLVSSGILENEDSYKQIRKKTAEAAVDSIKQHMNDENKQTCHQVIGFYNQVIYRCEHGPSFFQQKDRSFDRKKKELNFQAVQTIRNEIQTLYENGEINRDIAHHLREYINDMEAVLLTNT.

The next 11 membrane-spanning stretches (helical) occupy residues Val-7 to Val-29, Gly-46 to Phe-66, Pro-83 to Ile-103, Ile-110 to Val-130, Ala-156 to Ile-176, Ser-182 to Ile-202, Phe-228 to Gly-248, Ile-276 to Val-296, Ile-315 to Ala-335, Gly-364 to Phe-384, and Leu-389 to Leu-409.

This sequence belongs to the monovalent cation:proton antiporter 1 (CPA1) transporter (TC 2.A.36) family. Nhak (TC 2.A.36.3.2) subfamily.

It is found in the cell membrane. Its function is as follows. Transporter involved in the efflux of sodium, potassium, lithium and rubidium. The polypeptide is Sodium, potassium, lithium and rubidium/H(+) antiporter (nhaK) (Bacillus pumilus (strain SAFR-032)).